Consider the following 388-residue polypeptide: Chorismate synthase (388 aa).

R39 and R45 together coordinate NADP(+). FMN is bound by residues R130–S132, N251–A252, G296, K311–T315, and R337.

It belongs to the chorismate synthase family. In terms of assembly, homotetramer. Requires FMNH2 as cofactor.

It carries out the reaction 5-O-(1-carboxyvinyl)-3-phosphoshikimate = chorismate + phosphate. The protein operates within metabolic intermediate biosynthesis; chorismate biosynthesis; chorismate from D-erythrose 4-phosphate and phosphoenolpyruvate: step 7/7. Functionally, catalyzes the anti-1,4-elimination of the C-3 phosphate and the C-6 proR hydrogen from 5-enolpyruvylshikimate-3-phosphate (EPSP) to yield chorismate, which is the branch point compound that serves as the starting substrate for the three terminal pathways of aromatic amino acid biosynthesis. This reaction introduces a second double bond into the aromatic ring system. This chain is Chorismate synthase, found in Streptococcus uberis (strain ATCC BAA-854 / 0140J).